Here is a 402-residue protein sequence, read N- to C-terminus: Fugralins biosynthesis cluster protein 2 (402 aa).

5 helical membrane passes run 28–48 (NCLA…CFLL), 109–129 (ILIF…AILV), 145–165 (IFWW…TAIV), 232–252 (VIFG…AVTV), and 264–284 (LAPL…IVCV). Disordered stretches follow at residues 312–335 (NPNT…TGPK) and 378–402 (TQDN…PWGV). The span at 324–334 (TKGSQLSSTGP) shows a compositional bias: polar residues. The N-linked (GlcNAc...) asparagine glycan is linked to N381.

The protein belongs to the SAT4 family.

The protein resides in the membrane. It functions in the pathway secondary metabolite biosynthesis. Functionally, part of the gene cluster that mediates the biosynthesis of the tetraketides fugralins such as linear fugralin A and cyclic fugralin B, volatile compounds that play a role in the asexual reproductive cycle but are not involved in pathogenicity. One of the key features of fugralins is the presence of a double methyl group, which is only rarely encountered in fungal secondary metabolites. As the fugralins cluster does not contain an independent methyltransferase, the PKS FGR1 is probably responsible for adding two methyl groups to the same carbon atom. Fugralin B is similar to fugralin A except for a cyclization between the carboxylic acid C-8 and the alcohol on C-4 resulting in a six membered lactone ring, probably catalyzed by the cyclase FGR4. The exact role of the individual cluster genes remains unknown and further work is needed to unravel the biosynthetic pathway. The protein is Fugralins biosynthesis cluster protein 2 of Gibberella zeae (strain ATCC MYA-4620 / CBS 123657 / FGSC 9075 / NRRL 31084 / PH-1) (Wheat head blight fungus).